The sequence spans 262 residues: MTKQFAVIGNPIEQSRSPELHHAFAEKTGVDLNYQKRLAPLDGFESSMRSFFAEGGSGMNVTVPFKEQAFALCDVLTERAQIAKAVNTLWMENGKLHGDNTDGQGLVAAIQALEWNLENTTILILGAGGATRGVIYPLVQAGAQKIVIANRTLARAEQLVDDLKTAVPQAQLQAISLNDLEGDFDIVINATSTSLSGDALQLPEKLQFKYAYEMAYGKPSSFIDQAKQRNVPYAEGFGMLVGQAIEAFYIWNGVRPQLKDFL.

Shikimate-binding positions include 15–17 (SRS) and T62. Catalysis depends on K66, which acts as the Proton acceptor. An NADP(+)-binding site is contributed by E78. The shikimate site is built by N87 and D102. Residues 126–130 (GAGGA), 150–155 (NRTLAR), and M214 contribute to the NADP(+) site. Y216 provides a ligand contact to shikimate. G236 is an NADP(+) binding site.

Belongs to the shikimate dehydrogenase family. Homodimer.

It carries out the reaction shikimate + NADP(+) = 3-dehydroshikimate + NADPH + H(+). The protein operates within metabolic intermediate biosynthesis; chorismate biosynthesis; chorismate from D-erythrose 4-phosphate and phosphoenolpyruvate: step 4/7. Its function is as follows. Involved in the biosynthesis of the chorismate, which leads to the biosynthesis of aromatic amino acids. Catalyzes the reversible NADPH linked reduction of 3-dehydroshikimate (DHSA) to yield shikimate (SA). The polypeptide is Shikimate dehydrogenase (NADP(+)) (Acinetobacter baumannii (strain AB0057)).